A 139-amino-acid chain; its full sequence is Small ribosomal subunit protein uS12 (139 aa).

D102 is modified (3-methylthioaspartic acid).

The protein belongs to the universal ribosomal protein uS12 family. As to quaternary structure, part of the 30S ribosomal subunit. Contacts proteins S8 and S17. May interact with IF1 in the 30S initiation complex.

In terms of biological role, with S4 and S5 plays an important role in translational accuracy. Functionally, interacts with and stabilizes bases of the 16S rRNA that are involved in tRNA selection in the A site and with the mRNA backbone. Located at the interface of the 30S and 50S subunits, it traverses the body of the 30S subunit contacting proteins on the other side and probably holding the rRNA structure together. The combined cluster of proteins S8, S12 and S17 appears to hold together the shoulder and platform of the 30S subunit. The protein is Small ribosomal subunit protein uS12 of Bacillus pumilus (strain SAFR-032).